A 402-amino-acid polypeptide reads, in one-letter code: C2H2 finger domain transcription factor CON7 (402 aa).

The tract at residues 1–247 (MLASSRQPRH…GAQQHKRPRR (247 aa)) is disordered. Composition is skewed to polar residues over residues 19–49 (LSSS…TSVG) and 72–86 (CGDN…TVDT). Positions 87–98 (SSAAQYNASAQQ) are enriched in low complexity. 2 stretches are compositionally biased toward polar residues: residues 99–116 (EVRS…TPTS) and 125–151 (ARSS…SSGD). The C2H2-type zinc-finger motif lies at 256-282 (YKCGWQGCEKAYGTLNHLNAHVTMQSH). Residues 289–323 (EEFKEIRKEWKARKKEEEAARKADEERQRQAAQSQ) adopt a coiled-coil conformation. Positions 302 to 317 (KKEEEAARKADEERQR) are enriched in basic and acidic residues. The tract at residues 302-402 (KKEEEAARKA…GSNQAMYNQR (101 aa)) is disordered. Polar residues-rich tracts occupy residues 322–341 (SQGG…SSNG), 363–373 (AATSTSVQQQP), and 392–402 (GGSNQAMYNQR).

The protein localises to the nucleus. Functionally, transcription factor that plays a central role in appressorium formation and pathogenicity. Required for the expression of a large set of genes including factors that might play a role in membrane metabolism and ergosterol biosynthesis, the chitin-binding protein CBP1,as well as CHS7 that is essential for normal pathogenic development. The chain is C2H2 finger domain transcription factor CON7 from Pyricularia oryzae (strain 70-15 / ATCC MYA-4617 / FGSC 8958) (Rice blast fungus).